Reading from the N-terminus, the 58-residue chain is Potassium channel toxin alpha-KTx BmKcug1a (58 aa).

A signal peptide spans 1–21 (MKISFLLLLAIVICSIGWTEA). Pyrrolidone carboxylic acid is present on Q22. Cystine bridges form between C28-C49, C34-C54, and C38-C56.

The protein belongs to the short scorpion toxin superfamily. Potassium channel inhibitor family. Alpha-KTx 01 subfamily. Expressed by the venom gland.

It is found in the secreted. Its function is as follows. Potent blocker of both large-conductance calcium-activated potassium channels (KCa1.1/KCNMA1) and voltage-gated potassium channels (Kv1.3/KCNA3 and ERG1/Kv11.1/KCNH2). The sequence is that of Potassium channel toxin alpha-KTx BmKcug1a from Olivierus martensii (Manchurian scorpion).